Here is a 573-residue protein sequence, read N- to C-terminus: Transcription factor E3 (573 aa).

At serine 47 the chain carries Phosphoserine; by MTOR. The interval 91 to 151 (TLSASSSAEG…SPAPASPAIS (61 aa)) is disordered. Over residues 107–126 (SSSSSSRVLLRQQLMRAQAQ) the composition is skewed to low complexity. A compositionally biased stretch (basic and acidic residues) spans 127–136 (EQERRERREQ). Residues 137–151 (ASSFPSPAPASPAIS) show a composition bias toward low complexity. At arginine 186 the chain carries Asymmetric dimethylarginine. The interval 209–248 (LASQALTPPPGGASVQPLPTPEAAHAPGPTSSAPNSPMAL) is disordered. The interval 258 to 269 (EIDDVIDEIISL) is strong transcription activation domain. Serine 319 bears the Phosphoserine; by MTOR mark. Lysine 337 is covalently cross-linked (Glycyl lysine isopeptide (Lys-Gly) (interchain with G-Cter in SUMO2)). The bHLH domain occupies 344–397 (QKKDNHNLIERRRRFNINDRIKELGTLIPKSSDPEMRWNKGTILKASVDYIRKL). Residues 354-357 (RRRR) carry the Nuclear localization signal motif. Positions 407–428 (LESRQRSLEQANRSLQLRIQEL) are leucine-zipper. Positions 531–573 (VGGLSGGTLSPLRAASDPLLSSVSPAVSKASSRRSSFSMEEES) are disordered. Over residues 537–573 (GTLSPLRAASDPLLSSVSPAVSKASSRRSSFSMEEES) the composition is skewed to low complexity. Residues serine 540, serine 546, serine 552, serine 554, serine 558, and serine 566 each carry the phosphoserine modification.

This sequence belongs to the MiT/TFE family. Homodimer and heterodimer; with TFEB or MITF. Interacts with RRAGC/RagC GDP-bound and RRAGD/RagD GDP-bound; promoting its recruitment to lysosomal membrane in the presence of nutrients. Phosphorylation ar Ser-47 and Ser-319 by MTOR via non-canonical mTORC1 pathway regulates its stability and subcellular location, respectively. When nutrients are present, phosphorylation by MTOR at Ser-47 promotes ubiquitination by the SCF(BTRC) complex, followed by degradation. When nutrients are present, phosphorylation by MTOR at Ser-319 also promotes association with 14-3-3/YWHA adapters and retention in the cytosol. Phosphorylation at Ser-47 plays a more critical role than phosphorylation at Ser-319 for TFE3 inactivation. Inhibition of mTORC1, starvation and lysosomal disruption, promotes dephosphorylation and transcription factor activity. Post-translationally, ubiquitinated by the SCF(BTRC) and SCF(FBXW11) complexes following phosphorylation at Ser-47 by MTOR, leading to its degradation by the proteasome. In terms of processing, sumoylated; does not affect dimerization with MITF.

The protein localises to the cytoplasm. It is found in the cytosol. The protein resides in the nucleus. Its subcellular location is the lysosome membrane. Functionally, transcription factor that acts as a master regulator of lysosomal biogenesis and immune response. Specifically recognizes and binds E-box sequences (5'-CANNTG-3'); efficient DNA-binding requires dimerization with itself or with another MiT/TFE family member such as TFEB or MITF. Involved in the cellular response to amino acid availability by acting downstream of MTOR: in the presence of nutrients, TFE3 phosphorylation by MTOR promotes its inactivation. Upon starvation or lysosomal stress, inhibition of MTOR induces TFE3 dephosphorylation, resulting in transcription factor activity. Specifically recognizes and binds the CLEAR-box sequence (5'-GTCACGTGAC-3') present in the regulatory region of many lysosomal genes, leading to activate their expression, thereby playing a central role in expression of lysosomal genes. Maintains the pluripotent state of embryonic stem cells by promoting the expression of genes such as ESRRB; mTOR-dependent TFE3 cytosolic retention and inactivation promotes exit from pluripotency. Required to maintain the naive pluripotent state of hematopoietic stem cell; mTOR-dependent cytoplasmic retention of TFE3 promotes the exit of hematopoietic stem cell from pluripotency. TFE3 activity is also involved in the inhibition of neuronal progenitor differentiation. Acts as a positive regulator of browning of adipose tissue by promoting expression of target genes; mTOR-dependent phosphorylation promotes cytoplasmic retention of TFE3 and inhibits browning of adipose tissue. In association with TFEB, activates the expression of CD40L in T-cells, thereby playing a role in T-cell-dependent antibody responses in activated CD4(+) T-cells and thymus-dependent humoral immunity. Specifically recognizes the MUE3 box, a subset of E-boxes, present in the immunoglobulin enhancer. It also binds very well to a USF/MLTF site. May regulate lysosomal positioning in response to nutrient deprivation by promoting the expression of PIP4P1. In Bos taurus (Bovine), this protein is Transcription factor E3.